Consider the following 673-residue polypeptide: Fatty acyl-CoA synthetase B (673 aa).

The signal sequence occupies residues 1-18 (MINNWLAVGLLVVSGILA). N-linked (GlcNAc...) asparagine glycosylation occurs at Asn267.

It belongs to the ATP-dependent AMP-binding enzyme family.

The protein resides in the endoplasmic reticulum. It catalyses the reaction a long-chain fatty acid + ATP + CoA = a long-chain fatty acyl-CoA + AMP + diphosphate. Its function is as follows. Long chain fatty acid acyl-CoA synthetases catalyze the formation of a thiester bond between a free fatty acid and coenzyme A during fatty acid metabolic process. This chain is Fatty acyl-CoA synthetase B (fcsB), found in Dictyostelium discoideum (Social amoeba).